We begin with the raw amino-acid sequence, 643 residues long: Threonine--tRNA ligase (643 aa).

A TGS domain is found at 1-61 (MIEIFIEDLN…NQSGNLKFLK (61 aa)). Residues 246-539 (DHRKIGKDLE…LLEHYAGFLP (294 aa)) form a catalytic region. 3 residues coordinate Zn(2+): Cys-339, His-390, and His-516.

This sequence belongs to the class-II aminoacyl-tRNA synthetase family. Homodimer. The cofactor is Zn(2+).

Its subcellular location is the cytoplasm. It catalyses the reaction tRNA(Thr) + L-threonine + ATP = L-threonyl-tRNA(Thr) + AMP + diphosphate + H(+). In terms of biological role, catalyzes the attachment of threonine to tRNA(Thr) in a two-step reaction: L-threonine is first activated by ATP to form Thr-AMP and then transferred to the acceptor end of tRNA(Thr). Also edits incorrectly charged L-seryl-tRNA(Thr). This Sulfurihydrogenibium sp. (strain YO3AOP1) protein is Threonine--tRNA ligase.